The primary structure comprises 126 residues: Profilin (126 aa).

Belongs to the profilin family. Occurs in many kinds of cells as a complex with monomeric actin in a 1:1 ratio.

Its subcellular location is the cytoplasm. The protein resides in the cytoskeleton. In terms of biological role, binds to actin and affects the structure of the cytoskeleton. At high concentrations, profilin prevents the polymerization of actin, whereas it enhances it at low concentrations. By binding to PIP2, it inhibits the formation of IP3 and DG. This chain is Profilin, found in Bombyx mori (Silk moth).